Here is a 129-residue protein sequence, read N- to C-terminus: Protein RfbJ (129 aa).

It belongs to the glycosyltransferase 2 family.

It functions in the pathway bacterial outer membrane biogenesis; lipopolysaccharide biosynthesis. In Shigella flexneri, this protein is Protein RfbJ (rfbJ).